A 426-amino-acid chain; its full sequence is G2/mitotic-specific cyclin-A (426 aa).

Residues 1 to 11 (MSMVHGSSFQI) are compositionally biased toward polar residues. The disordered stretch occupies residues 1–22 (MSMVHGSSFQIAQDGENENQGV).

This sequence belongs to the cyclin family. Cyclin AB subfamily.

In terms of biological role, essential for the control of the cell cycle at the G2/M (mitosis) transition. Interacts with the CDC2 and CDK2 protein kinases to form MPF. G2/M cyclins accumulate steadily during G2 and are abruptly destroyed at mitosis. In Patella vulgata (Common limpet), this protein is G2/mitotic-specific cyclin-A.